The primary structure comprises 83 residues: MKTLLLTLVVVTIVCLDFGHTLICYNDHGFIGKTTETCENGMTTCYEKRWTEARGTRIDRGCGCPNVKPGVNLNCCKTDRCNG.

The N-terminal stretch at 1 to 21 (MKTLLLTLVVVTIVCLDFGHT) is a signal peptide. 4 cysteine pairs are disulfide-bonded: Cys24–Cys45, Cys38–Cys62, Cys64–Cys75, and Cys76–Cys81.

Belongs to the three-finger toxin family. Short-chain subfamily. Type I alpha-neurotoxin sub-subfamily. As to expression, expressed by the venom gland.

It is found in the secreted. Binds to muscle nicotinic acetylcholine receptor (nAChR) and inhibits acetylcholine from binding to the receptor, thereby impairing neuromuscular transmission. This chain is Three-finger toxin MALT0058C, found in Micrurus altirostris (Uruguayan coral snake).